Consider the following 109-residue polypeptide: Large ribosomal subunit protein uL22 (109 aa).

The protein belongs to the universal ribosomal protein uL22 family. As to quaternary structure, part of the 50S ribosomal subunit.

This protein binds specifically to 23S rRNA; its binding is stimulated by other ribosomal proteins, e.g. L4, L17, and L20. It is important during the early stages of 50S assembly. It makes multiple contacts with different domains of the 23S rRNA in the assembled 50S subunit and ribosome. In terms of biological role, the globular domain of the protein is located near the polypeptide exit tunnel on the outside of the subunit, while an extended beta-hairpin is found that lines the wall of the exit tunnel in the center of the 70S ribosome. The protein is Large ribosomal subunit protein uL22 of Methylibium petroleiphilum (strain ATCC BAA-1232 / LMG 22953 / PM1).